We begin with the raw amino-acid sequence, 538 residues long: Phosphoenolpyruvate carboxykinase (ATP) (538 aa).

Residues Arg64, Tyr205, and Lys211 each contribute to the substrate site. Residues Lys211, His230, and 246-254 contribute to the ATP site; that span reads GLSGTGKTT. Residues Lys211 and His230 each contribute to the Mn(2+) site. Position 267 (Asp267) interacts with Mn(2+). ATP-binding positions include Glu295, Arg331, 447-448, and Thr453; that span reads RI. Substrate is bound at residue Arg331.

Belongs to the phosphoenolpyruvate carboxykinase (ATP) family. As to quaternary structure, monomer. Mn(2+) is required as a cofactor.

It localises to the cytoplasm. It carries out the reaction oxaloacetate + ATP = phosphoenolpyruvate + ADP + CO2. It functions in the pathway carbohydrate biosynthesis; gluconeogenesis. In terms of biological role, involved in the gluconeogenesis. Catalyzes the conversion of oxaloacetate (OAA) to phosphoenolpyruvate (PEP) through direct phosphoryl transfer between the nucleoside triphosphate and OAA. The chain is Phosphoenolpyruvate carboxykinase (ATP) from Haemophilus influenzae (strain PittEE).